An 861-amino-acid polypeptide reads, in one-letter code: Probable alpha,alpha-trehalose-phosphate synthase [UDP-forming] 10 (861 aa).

Serine 5 is modified (phosphoserine). The residue at position 32 (threonine 32) is a Phosphothreonine. A glycosyltransferase region spans residues 59-546 (ERKIIVANFL…ARSFSQDLER (488 aa)).

This sequence in the N-terminal section; belongs to the glycosyltransferase 20 family. In the C-terminal section; belongs to the trehalose phosphatase family.

The catalysed reaction is D-glucose 6-phosphate + UDP-alpha-D-glucose = alpha,alpha-trehalose 6-phosphate + UDP + H(+). The protein is Probable alpha,alpha-trehalose-phosphate synthase [UDP-forming] 10 (TPS10) of Arabidopsis thaliana (Mouse-ear cress).